Here is a 503-residue protein sequence, read N- to C-terminus: Maturase K (503 aa).

This sequence belongs to the intron maturase 2 family. MatK subfamily.

The protein localises to the plastid. Its subcellular location is the chloroplast. Its function is as follows. Usually encoded in the trnK tRNA gene intron. Probably assists in splicing its own and other chloroplast group II introns. The sequence is that of Maturase K from Kunzea pulchella (Red kunzea).